The sequence spans 676 residues: Polyunsaturated fatty acid lipoxygenase ALOX15B (676 aa).

The PLAT domain maps to 2–124 (AEFRVRVSTG…TLVLQEGTAK (123 aa)). Ca(2+)-binding residues include Gly15, Gly17, Asp39, Asn40, Gly42, Glu44, Asp85, and Ala86. A Lipoxygenase domain is found at 125–676 (VSWADHHPVL…PPLIENSVSI (552 aa)). The Fe cation site is built by His373, His378, His553, and Ile676.

The protein belongs to the lipoxygenase family. Requires Fe cation as cofactor. As to expression, expressed in hair, prostate, lung, ovary, lymph node, spinal cord and cornea.

The protein localises to the nucleus. Its subcellular location is the cytoplasm. The protein resides in the cytosol. It is found in the cell membrane. It localises to the cytoskeleton. The protein localises to the membrane. Its subcellular location is the cell junction. The protein resides in the adherens junction. It is found in the focal adhesion. It catalyses the reaction (5Z,8Z,11Z,14Z)-eicosatetraenoate + O2 = (15S)-hydroperoxy-(5Z,8Z,11Z,13E)-eicosatetraenoate. It carries out the reaction (9Z,12Z)-octadecadienoate + O2 = 13-hydroperoxy-(9Z,11E)-octadecadienoate. The catalysed reaction is (5S)-hydroxy-(6E,8Z,11Z,14Z)-eicosatetraenoate + O2 = (5S)-hydroxy-(15S)-hydroperoxy-(6E,8Z,11Z,13E)-eicosatetraenoate. The enzyme catalyses (5Z,8Z,11Z,14Z)-eicosatetraenoate + O2 = 5-hydroperoxy-(6E,8Z,11Z,14Z)-eicosatetraenoate. It catalyses the reaction (5S,6R)-dihydroxy-(7E,9E,11Z,14Z)-eicosatetraenoate + O2 = (5S,6R)-dihydroxy-(15S)-hydroperoxy-(7E,9E,11Z,13E)-eicosatetraenoate. It carries out the reaction (5S)-hydroperoxy-(6E,8Z,11Z,14Z)-eicosatetraenoate + O2 = (5S,15S)-dihydroperoxy-(6E,8Z,11Z,13E)-eicosatetraenoate. The catalysed reaction is 2-(5Z,8Z,11Z,14Z-eicosatetraenoyl)-glycerol + O2 = 2-[15(S)-hydroperoxy-(5Z,8Z,11Z,13E)-eicosatetraenoyl]-glycerol. The enzyme catalyses (8S)-hydroperoxy-(5Z,9E,11Z,14Z)-eicosatetraenoate + O2 = (8S,15S)-dihydroperoxy-(5Z,9E,11Z,13E)-eicosatetraenoate. It catalyses the reaction N-(5Z,8Z,11Z,14Z)-eicosatetraenoyl-L-alanine + O2 = N-(15S)-hydroperoxy-(5Z,8Z,11Z,13E)-eicosatetraenoyl-alanine. It carries out the reaction N-(5Z,8Z,11Z,14Z)-eicosatetraenoyl-gamma-aminobutanoate + O2 = N-(15S)-hydroperoxy-(5Z,8Z,11Z,13E)-eicosatetraenoyl-gamma-aminobutanoate. The catalysed reaction is N-(5Z,8Z,11Z,14Z)-eicosatetraenoyl-glycine + O2 = N-(15S)-hydroperoxy-(5Z,8Z,11Z,13E)-eicosatetraenoyl-glycine. The enzyme catalyses N-(5Z,8Z,11Z,14Z)-eicosatetraenoyl-taurine + O2 = N-(15S)-hydroperoxy-(5Z,8Z,11Z,13E)-eicosatetraenoyl-taurine. It catalyses the reaction 2-(5Z,8Z,11Z,14Z-eicosatetraenoyl)-glycerol + O2 = 2-[12-hydroperoxy-(5Z,8Z,10E,14Z)-eicosatetraenoyl]-glycerol. It carries out the reaction 1-octadecanoyl-2-(5Z,8Z,11Z,14Z-eicosatetraenoyl)-sn-glycero-3-phosphocholine + O2 = 1-octadecanoyl-2-(15-hydroperoxy-5Z,8Z,11Z,13E-eicosatetraenoyl)-sn-glycero-3-phosphocholine. The catalysed reaction is a 1-acyl-2-(5Z,8Z,11Z,14Z-eicosatetraenoyl)-sn-glycero-3-phospho-(1D-myo-inositol) + O2 = a 1-acyl-2-(15-hydroperoxy-5Z,8Z,11Z,13E-eicosatetraenoyl)-sn-glycero-3-phospho-(1D-myo-inositol). The enzyme catalyses a 1-acyl-2-(8Z,11Z,14Z-eicosatrienoyl)-sn-glycero-3-phospho-(1D-myo-inositol) + O2 = a 1-acyl-2-(15-hydroperoxy-8Z,11Z,13E-eicosatrienoyl)-sn-glycero-3-phospho-(1D-myo-inositol). It catalyses the reaction 1-octadecanoyl-2-(5Z,8Z,11Z,14Z)-eicosatetraenoyl-sn-glycero-3-phosphoethanolamine + O2 = 1-octadecanoyl-2-(15-hydroperoxy-5Z,8Z,11Z,13E-eicosatetraenoyl)-sn-glycero-3-phosphoethanolamine. It carries out the reaction 1-octadecanoyl-2-(5Z,8Z,11Z,14Z-eicosatetraenoyl)-sn-glycero-3-phospho-(1D-myo-inositol) + O2 = 1-octadecanoyl-2-(15-hydroperoxy-5Z,8Z,11Z,13E-eicosatetraenoyl)-sn-glycero-3-phospho-(1D-myo-inositol). The catalysed reaction is (8Z,11Z,14Z)-eicosatrienoate + O2 = 15-hydroperoxy-(8Z,11Z,13E)-eicosatrienoate. The enzyme catalyses (7S)-hydroperoxy-(4Z,8E,10Z,13Z,16Z,19Z)-docosahexaenoate + O2 = (7S,17S)-dihydroperoxy-(4Z,8E,10Z,13Z,15E,19Z)-docosahexaenoate. It catalyses the reaction (5Z,8Z,11Z,14Z)-eicosatetraenoate + O2 = 15-hydroperoxy-(5Z,8Z,11Z,13E)-eicosatetraenoate. It participates in lipid metabolism; hydroperoxy eicosatetraenoic acid biosynthesis. Non-heme iron-containing dioxygenase that catalyzes the stereo-specific peroxidation of free and esterified polyunsaturated fatty acids (PUFAs) generating a spectrum of bioactive lipid mediators. It inserts peroxyl groups at C15 of arachidonate ((5Z,8Z,11Z,14Z)-eicosatetraenoate) producing (15S)-hydroperoxyeicosatetraenoate/(15S)-HPETE. Also peroxidizes linoleate ((9Z,12Z)-octadecadienoate) to 13-hydroperoxyoctadecadienoate/13-HPODE. Oxygenates arachidonyl derivatives such as 2-arachidonoylglycerol (2-AG) leading to the production and extracellular release of 15-hydroxyeicosatetraenoyl glycerol (15-HETE-G) that acts as a peroxisome proliferator-activated receptor alpha agonist. Has the ability to efficiently class-switch ALOX5 pro-inflammatory mediators into anti-inflammatory intermediates. Participates in the sequential oxidations of DHA ((4Z,7Z,10Z,13Z,16Z,19Z)-docosahexaenoate) to generate specialized pro-resolving mediators (SPMs) resolvin D5 ((7S,17S)-diHPDHA), which can actively down-regulate the immune response and have anti-aggregation properties with platelets. In addition to free PUFAs hydrolyzed from phospholipids, it directly oxidizes PUFAs esterified to membrane-bound phospholipids. Has no detectable 8S-lipoxygenase activity on arachidonate but reacts with (8S)-HPETE to produce (8S,15S)-diHPETE. May regulate progression through the cell cycle and cell proliferation. May also regulate cytokine secretion by macrophages and therefore play a role in the immune response. May also regulate macrophage differentiation into proatherogenic foam cells. Its function is as follows. Does not convert arachidonic acid to 15S-hydroperoxyeicosatetraenoic acid/(15S)-HPETE. This chain is Polyunsaturated fatty acid lipoxygenase ALOX15B, found in Homo sapiens (Human).